The sequence spans 1222 residues: MLFNINEKGEPLVISFAPFLSPEAIKHLQENERCSDQSQKRTAQQIEAIYTSGQNILVSASAGSGKTFVMVERILDKILRGVSIDRLFISTFTVKAATELRERIENKLYSQIAQTTDFQMKVYLTEQLQSLCQADIGTMDAFAQKVVSRYGYSIGISSQFRIMQDKAEQDVLKQEVFSKLFNEFMNQKEAPVFRALVKNFSGNCKDTSAFRELVYTCYSFSQSTENPKIWLQENFLSAAKTYQRLEDIPDHDIELLLLAMQDTANQLRDVTDMEDYGQLTKAGSRSAKYTKHLTIIEKLSDWVRDFKCLYGKAGLDRLIRDVTGLIPSGNDVTVSKVKYPVFKTLHQKLKQFRHLETILMYQKDCFPLLEQLQDFVLAFSEAYLAVKIQESAFEFSDIAHFAIKILEENTDIRQSYQQHYHEVMVDEYQDNNHMQERLLTLLSNGHNRFMVGDIKQSIYRFRQADPQIFNQKFRDYQKKPEQGKVILLKENFRSQSEVLNVSNAVFSHLMDESVGDALYDEQHQLIAGSHAQTVPYLDRRAQLLLYNSDKDDGNAPSDSEGISFSEVTIVAKEIIKLHNDKGVPFEDITLLVSSRTRNDIISHTFNQYGIPIVTDGGQQNYLKSVEVMVMLDTLRTINNPRNDYALVALLRSPMFAFDEDDLARIALQKDNELDKDCLYDKIQRAVIGRGAHPELIHDTLLGKLNIFLKTLKSWRRYAKLGSLYDLIWKIFNDRFYFDFVASQAKAEQAQANLYALALRANQFEKSGYKGLYRFIKMIDKVLETQNDLADVEVAAPKQAVNLMTIHKSKGLQFPYVFILNCDKRFSMTDIHKSFILNRQHGIGIKYLADIKGLLGETTLNSVKVSMETLPYQLNKQELRLATLSEQMRLLYVAMTRAEKKVYFIGKASKSKSQDITDPKKLGKLLPLALREQLLTFQDWLLAIADIFSTEDLYFDVRFIEDSDLTQESVGRLQTPQLLNPDDLKDNRQSETIARALDMLEAVSQLNANYEAAIHLPTVRTPSQLKATYEPLLEPIGVDIIEKSSRSLSDFTLPHFSKKAKVEVSHIGSALHQLMQVLPLSKPINQQTLLDALRGIASNEEVKTALDLKKIESFFCDTSLGQFFQTYQKHLYREAPFAILKLDPISQEEYVLRGIIDAYFLFDDHIVLVDYKTDKYKQPIELKKRYQQQLELYAEALTQTYKLPVTKRYLVLMGGGNPEIVEV.

Residues 39–495 (QKRTAQQIEA…ILLKENFRSQ (457 aa)) enclose the UvrD-like helicase ATP-binding domain. Position 60–67 (60–67 (ASAGSGKT)) interacts with ATP. The 287-residue stretch at 524–810 (QLIAGSHAQT…NLMTIHKSKG (287 aa)) folds into the UvrD-like helicase C-terminal domain.

This sequence belongs to the helicase family. AddA subfamily. As to quaternary structure, heterodimer of AddA and AddB/RexB. The cofactor is Mg(2+).

It catalyses the reaction Couples ATP hydrolysis with the unwinding of duplex DNA by translocating in the 3'-5' direction.. It carries out the reaction ATP + H2O = ADP + phosphate + H(+). The heterodimer acts as both an ATP-dependent DNA helicase and an ATP-dependent, dual-direction single-stranded exonuclease. Recognizes the chi site generating a DNA molecule suitable for the initiation of homologous recombination. The AddA nuclease domain is required for chi fragment generation; this subunit has the helicase and 3' -&gt; 5' nuclease activities. In Streptococcus pyogenes serotype M2 (strain MGAS10270), this protein is ATP-dependent helicase/nuclease subunit A.